Reading from the N-terminus, the 468-residue chain is 3-isopropylmalate dehydratase large subunit (468 aa).

Residues Cys347, Cys407, and Cys410 each contribute to the [4Fe-4S] cluster site.

It belongs to the aconitase/IPM isomerase family. LeuC type 1 subfamily. As to quaternary structure, heterodimer of LeuC and LeuD. [4Fe-4S] cluster serves as cofactor.

The catalysed reaction is (2R,3S)-3-isopropylmalate = (2S)-2-isopropylmalate. It functions in the pathway amino-acid biosynthesis; L-leucine biosynthesis; L-leucine from 3-methyl-2-oxobutanoate: step 2/4. In terms of biological role, catalyzes the isomerization between 2-isopropylmalate and 3-isopropylmalate, via the formation of 2-isopropylmaleate. The sequence is that of 3-isopropylmalate dehydratase large subunit from Glaesserella parasuis serovar 5 (strain SH0165) (Haemophilus parasuis).